The sequence spans 462 residues: Adenosylhomocysteinase (462 aa).

Residues Thr55, Asp128, and Glu188 each coordinate substrate. An NAD(+)-binding site is contributed by 189 to 191; that stretch reads TTT. Substrate is bound by residues Lys218 and Asp222. NAD(+) is bound by residues Asn223, 252–257, Glu275, Asn310, 331–333, and Asn376; these read GYGDVG and IGH.

The protein belongs to the adenosylhomocysteinase family. NAD(+) serves as cofactor.

Its subcellular location is the cytoplasm. It catalyses the reaction S-adenosyl-L-homocysteine + H2O = L-homocysteine + adenosine. Its pathway is amino-acid biosynthesis; L-homocysteine biosynthesis; L-homocysteine from S-adenosyl-L-homocysteine: step 1/1. In terms of biological role, may play a key role in the regulation of the intracellular concentration of adenosylhomocysteine. The sequence is that of Adenosylhomocysteinase from Roseobacter denitrificans (strain ATCC 33942 / OCh 114) (Erythrobacter sp. (strain OCh 114)).